Reading from the N-terminus, the 198-residue chain is MTLVPMVVEQTSRGERAYDIYSRLLKERIIFITGPIEDQMASLVVAQLIFLEAENPEKDISMYINSPGGVVTAGLSIYDTMQYVKPRIATLCLGQAASMGSLLLAAGEKGMRCALPNSRIMIHQPSGGFQGQATDIEIHAKEILNIKSRLNYIYVKHTGRELSEVVASMERDNFMSADSAQDFGIIDKVIEKRLDIDV.

Catalysis depends on S98, which acts as the Nucleophile. Residue H123 is part of the active site.

It belongs to the peptidase S14 family. Fourteen ClpP subunits assemble into 2 heptameric rings which stack back to back to give a disk-like structure with a central cavity, resembling the structure of eukaryotic proteasomes.

It is found in the cytoplasm. It carries out the reaction Hydrolysis of proteins to small peptides in the presence of ATP and magnesium. alpha-casein is the usual test substrate. In the absence of ATP, only oligopeptides shorter than five residues are hydrolyzed (such as succinyl-Leu-Tyr-|-NHMec, and Leu-Tyr-Leu-|-Tyr-Trp, in which cleavage of the -Tyr-|-Leu- and -Tyr-|-Trp bonds also occurs).. Functionally, cleaves peptides in various proteins in a process that requires ATP hydrolysis. Has a chymotrypsin-like activity. Plays a major role in the degradation of misfolded proteins. This is ATP-dependent Clp protease proteolytic subunit from Ehrlichia ruminantium (strain Welgevonden).